A 963-amino-acid chain; its full sequence is Ubiquitin carboxyl-terminal hydrolase 11 (963 aa).

The interval 64-93 (VTEDREPQHEELPGLDSQWRQIENGESGRE) is disordered. Residues 65-75 (TEDREPQHEEL) show a composition bias toward basic and acidic residues. Residues 76–184 (PGLDSQWRQI…GQPPIERKVI (109 aa)) form the DUSP domain. K245 carries the post-translational modification N6-acetyllysine. The USP domain occupies 309-930 (CGLTNLGNTC…AAYVLFYQRQ (622 aa)). The active-site Nucleophile is C318. 2 disordered regions span residues 644-691 (TKPN…SGVT) and 716-735 (LFTL…TSPE). S648 carries the phosphoserine modification. Residues 649-665 (DDEDDGDEKEDDEEDKD) show a composition bias toward acidic residues. Over residues 717–731 (FTLQTVNSNGTSDRT) the composition is skewed to polar residues. Residue S733 is modified to Phosphoserine. H888 serves as the catalytic Proton acceptor. The span at 938 to 957 (SPAGSSGAPASPACSSPPSS) shows a compositional bias: low complexity. The tract at residues 938 to 963 (SPAGSSGAPASPACSSPPSSEFMDVN) is disordered. Residue S948 is modified to Phosphoserine.

The protein belongs to the peptidase C19 family. Monomer. Associated component of the Polycomb group (PcG) multiprotein PRC1-like complex. Interacts with RANBP9/RANBPM. Interacts with BRCA2. Interacts with CHUK/IKKA. Interacts with NFKBIA. Interacts with SPRY3, RAE1, MYCBP2/PAM, and KCTD6. In terms of assembly, (Microbial infection) Interacts with papilloma virus protein 16E7.

Its subcellular location is the nucleus. It localises to the cytoplasm. It is found in the chromosome. It carries out the reaction Thiol-dependent hydrolysis of ester, thioester, amide, peptide and isopeptide bonds formed by the C-terminal Gly of ubiquitin (a 76-residue protein attached to proteins as an intracellular targeting signal).. In terms of biological role, protease that can remove conjugated ubiquitin from target proteins and polyubiquitin chains. Inhibits the degradation of target proteins by the proteasome. Cleaves preferentially 'Lys-6' and 'Lys-63'-linked ubiquitin chains. Has lower activity with 'Lys-11' and 'Lys-33'-linked ubiquitin chains, and extremely low activity with 'Lys-27', 'Lys-29' and 'Lys-48'-linked ubiquitin chains (in vitro). Plays a role in the regulation of pathways leading to NF-kappa-B activation. Plays a role in the regulation of DNA repair after double-stranded DNA breaks. Acts as a chromatin regulator via its association with the Polycomb group (PcG) multiprotein PRC1-like complex; may act by deubiquitinating components of the PRC1-like complex. Promotes cell proliferation by deubiquitinating phosphorylated E2F1. In Homo sapiens (Human), this protein is Ubiquitin carboxyl-terminal hydrolase 11 (USP11).